The following is a 418-amino-acid chain: 3-isopropylmalate dehydratase large subunit 1 (418 aa).

[4Fe-4S] cluster contacts are provided by Cys298, Cys358, and Cys361.

The protein belongs to the aconitase/IPM isomerase family. LeuC type 2 subfamily. As to quaternary structure, heterodimer of LeuC and LeuD. The cofactor is [4Fe-4S] cluster.

The catalysed reaction is (2R,3S)-3-isopropylmalate = (2S)-2-isopropylmalate. The protein operates within amino-acid biosynthesis; L-leucine biosynthesis; L-leucine from 3-methyl-2-oxobutanoate: step 2/4. In terms of biological role, catalyzes the isomerization between 2-isopropylmalate and 3-isopropylmalate, via the formation of 2-isopropylmaleate. This is 3-isopropylmalate dehydratase large subunit 1 from Methanopyrus kandleri (strain AV19 / DSM 6324 / JCM 9639 / NBRC 100938).